The chain runs to 159 residues: Cytochrome c-type biogenesis protein CcmE (159 aa).

The Cytoplasmic portion of the chain corresponds to methionine 1–arginine 8. A helical; Signal-anchor for type II membrane protein membrane pass occupies residues leucine 9–alanine 29. Residues leucine 30 to asparagine 159 lie on the Periplasmic side of the membrane. The heme site is built by histidine 130 and tyrosine 134.

This sequence belongs to the CcmE/CycJ family.

It is found in the cell inner membrane. Functionally, heme chaperone required for the biogenesis of c-type cytochromes. Transiently binds heme delivered by CcmC and transfers the heme to apo-cytochromes in a process facilitated by CcmF and CcmH. This chain is Cytochrome c-type biogenesis protein CcmE, found in Pseudoalteromonas translucida (strain TAC 125).